Reading from the N-terminus, the 296-residue chain is 33 kDa chaperonin (296 aa).

Intrachain disulfides connect C236/C238 and C269/C272.

The protein belongs to the HSP33 family. In terms of processing, under oxidizing conditions two disulfide bonds are formed involving the reactive cysteines. Under reducing conditions zinc is bound to the reactive cysteines and the protein is inactive.

It localises to the cytoplasm. Functionally, redox regulated molecular chaperone. Protects both thermally unfolding and oxidatively damaged proteins from irreversible aggregation. Plays an important role in the bacterial defense system toward oxidative stress. The chain is 33 kDa chaperonin from Lactobacillus acidophilus (strain ATCC 700396 / NCK56 / N2 / NCFM).